The following is a 159-amino-acid chain: 2-C-methyl-D-erythritol 2,4-cyclodiphosphate synthase (159 aa).

Positions 10 and 12 each coordinate a divalent metal cation. Residues 10–12 and 36–37 each bind 4-CDP-2-C-methyl-D-erythritol 2-phosphate; these read DVH and HS. H44 lines the a divalent metal cation pocket. Residues 58 to 60, 63 to 67, 134 to 137, and R144 each bind 4-CDP-2-C-methyl-D-erythritol 2-phosphate; these read DIG, FANTD, and TTNE.

The protein belongs to the IspF family. As to quaternary structure, homotrimer. A divalent metal cation is required as a cofactor.

The catalysed reaction is 4-CDP-2-C-methyl-D-erythritol 2-phosphate = 2-C-methyl-D-erythritol 2,4-cyclic diphosphate + CMP. It functions in the pathway isoprenoid biosynthesis; isopentenyl diphosphate biosynthesis via DXP pathway; isopentenyl diphosphate from 1-deoxy-D-xylulose 5-phosphate: step 4/6. Its function is as follows. Involved in the biosynthesis of isopentenyl diphosphate (IPP) and dimethylallyl diphosphate (DMAPP), two major building blocks of isoprenoid compounds. Catalyzes the conversion of 4-diphosphocytidyl-2-C-methyl-D-erythritol 2-phosphate (CDP-ME2P) to 2-C-methyl-D-erythritol 2,4-cyclodiphosphate (ME-CPP) with a corresponding release of cytidine 5-monophosphate (CMP). The chain is 2-C-methyl-D-erythritol 2,4-cyclodiphosphate synthase from Cytophaga hutchinsonii (strain ATCC 33406 / DSM 1761 / CIP 103989 / NBRC 15051 / NCIMB 9469 / D465).